The chain runs to 250 residues: Leucyl/phenylalanyl-tRNA--protein transferase (250 aa).

It belongs to the L/F-transferase family.

Its subcellular location is the cytoplasm. The enzyme catalyses N-terminal L-lysyl-[protein] + L-leucyl-tRNA(Leu) = N-terminal L-leucyl-L-lysyl-[protein] + tRNA(Leu) + H(+). It carries out the reaction N-terminal L-arginyl-[protein] + L-leucyl-tRNA(Leu) = N-terminal L-leucyl-L-arginyl-[protein] + tRNA(Leu) + H(+). It catalyses the reaction L-phenylalanyl-tRNA(Phe) + an N-terminal L-alpha-aminoacyl-[protein] = an N-terminal L-phenylalanyl-L-alpha-aminoacyl-[protein] + tRNA(Phe). Functionally, functions in the N-end rule pathway of protein degradation where it conjugates Leu, Phe and, less efficiently, Met from aminoacyl-tRNAs to the N-termini of proteins containing an N-terminal arginine or lysine. The sequence is that of Leucyl/phenylalanyl-tRNA--protein transferase from Cupriavidus necator (strain ATCC 17699 / DSM 428 / KCTC 22496 / NCIMB 10442 / H16 / Stanier 337) (Ralstonia eutropha).